The following is a 177-amino-acid chain: Large ribosomal subunit protein uL6 (177 aa).

It belongs to the universal ribosomal protein uL6 family. In terms of assembly, part of the 50S ribosomal subunit.

Its function is as follows. This protein binds to the 23S rRNA, and is important in its secondary structure. It is located near the subunit interface in the base of the L7/L12 stalk, and near the tRNA binding site of the peptidyltransferase center. This Actinobacillus pleuropneumoniae serotype 5b (strain L20) protein is Large ribosomal subunit protein uL6.